We begin with the raw amino-acid sequence, 241 residues long: uncharacterized protein (241 aa).

The segment at 19 to 53 (KRIGYGMGEKSSAGSSRDQTYSVKPASDVKDKKKV) is disordered. Residues 30–39 (SAGSSRDQTY) show a composition bias toward polar residues.

This is an uncharacterized protein from Ostreid herpesvirus 1 (isolate France) (OsHV-1).